We begin with the raw amino-acid sequence, 513 residues long: Cytochrome P450 86A1 (513 aa).

A helical membrane pass occupies residues Ile7 to Ser27. Cys456 provides a ligand contact to heme.

This sequence belongs to the cytochrome P450 family. The cofactor is heme. In terms of tissue distribution, expressed in roots.

The protein localises to the membrane. The catalysed reaction is an omega-methyl-long-chain fatty acid + reduced [NADPH--hemoprotein reductase] + O2 = an omega-hydroxy-long-chain fatty acid + oxidized [NADPH--hemoprotein reductase] + H2O + H(+). Catalyzes the omega-hydroxylation of various fatty acids (FA). Acts on saturated and unsaturated fatty acids with chain lengths from C12 to C18 but not on hexadecane. This is Cytochrome P450 86A1 (CYP86A1) from Arabidopsis thaliana (Mouse-ear cress).